Reading from the N-terminus, the 198-residue chain is dTTP/UTP pyrophosphatase (198 aa).

Asp76 (proton acceptor) is an active-site residue.

This sequence belongs to the Maf family. YhdE subfamily. A divalent metal cation serves as cofactor.

The protein resides in the cytoplasm. It catalyses the reaction dTTP + H2O = dTMP + diphosphate + H(+). It carries out the reaction UTP + H2O = UMP + diphosphate + H(+). Nucleoside triphosphate pyrophosphatase that hydrolyzes dTTP and UTP. May have a dual role in cell division arrest and in preventing the incorporation of modified nucleotides into cellular nucleic acids. The protein is dTTP/UTP pyrophosphatase of Shewanella denitrificans (strain OS217 / ATCC BAA-1090 / DSM 15013).